Here is a 400-residue protein sequence, read N- to C-terminus: LIM/homeobox protein Lhx3 (400 aa).

LIM zinc-binding domains are found at residues 34–84 (CAGC…CKDD) and 93–147 (CAAC…CKAD). Ser-74 is modified (phosphoserine). A DNA-binding region (homeobox) is located at residues 160–219 (AKRPRTTITAKQLETLKSAYNTSPKPARHVREQLSSETGLDMRVVQVWFQNRRAKEKRLK). Disordered regions lie at residues 215-280 (EKRL…SSLG) and 297-400 (TLDH…HAQF). At Tyr-230 the chain carries Phosphotyrosine. A phosphoserine mark is found at Ser-237 and Ser-241. Composition is skewed to pro residues over residues 319–334 (GIPPSPAAPQSLPGPQ) and 352–361 (SGPPGGPPPM). Residues 368-380 (GPSSDLSTESSSG) are compositionally biased toward polar residues.

In terms of assembly, interacts with POU1F1. At neuronal promoters, interacts with LDB1, in motor neurons LDB1 is displaced by ISL1 and a ternary complex is formed in which ISL1 contacts both LHX3 and LDB1; allosteric structural changes in the DNA binding domain of LHX3, induced by the ISL1-LHX3 interaction, may explain differences in sequence specificity of the different complexes. Interacts with LDB2. May interact with CITED2/MRG1. In terms of tissue distribution, mostly expressed in the pituitary anterior and intermediate lobes. It is also expressed in the pineal gland and transiently in the primordia of motor neurons including the spinal cord, pons and medulla oblongata.

The protein localises to the nucleus. Its function is as follows. Transcription factor. Recognizes and binds to the consensus sequence motif 5'-AATTAATTA-3' in the regulatory elements of target genes, such as glycoprotein hormones alpha chain CGA and visual system homeobox CHX10, positively modulating transcription; transcription can be co-activated by LDB2. Synergistically enhances transcription from the prolactin promoter in cooperation with POU1F1/Pit-1. Required for the establishment of the specialized cells of the pituitary gland and the nervous system. Involved in the development of interneurons and motor neurons in cooperation with LDB1 and ISL1. This is LIM/homeobox protein Lhx3 (Lhx3) from Mus musculus (Mouse).